The following is a 375-amino-acid chain: Queuine tRNA-ribosyltransferase (375 aa).

Aspartate 89 functions as the Proton acceptor in the catalytic mechanism. Substrate-binding positions include 89–93 (DSGGF), aspartate 143, glutamine 187, and glycine 214. The interval 245–251 (GVGKPED) is RNA binding. Aspartate 264 (nucleophile) is an active-site residue. The RNA binding; important for wobble base 34 recognition stretch occupies residues 269–273 (TRNAR). Zn(2+) is bound by residues cysteine 302, cysteine 304, cysteine 307, and histidine 333.

Belongs to the queuine tRNA-ribosyltransferase family. In terms of assembly, homodimer. Within each dimer, one monomer is responsible for RNA recognition and catalysis, while the other monomer binds to the replacement base PreQ1. Zn(2+) serves as cofactor.

It catalyses the reaction 7-aminomethyl-7-carbaguanine + guanosine(34) in tRNA = 7-aminomethyl-7-carbaguanosine(34) in tRNA + guanine. It participates in tRNA modification; tRNA-queuosine biosynthesis. Its function is as follows. Catalyzes the base-exchange of a guanine (G) residue with the queuine precursor 7-aminomethyl-7-deazaguanine (PreQ1) at position 34 (anticodon wobble position) in tRNAs with GU(N) anticodons (tRNA-Asp, -Asn, -His and -Tyr). Catalysis occurs through a double-displacement mechanism. The nucleophile active site attacks the C1' of nucleotide 34 to detach the guanine base from the RNA, forming a covalent enzyme-RNA intermediate. The proton acceptor active site deprotonates the incoming PreQ1, allowing a nucleophilic attack on the C1' of the ribose to form the product. After dissociation, two additional enzymatic reactions on the tRNA convert PreQ1 to queuine (Q), resulting in the hypermodified nucleoside queuosine (7-(((4,5-cis-dihydroxy-2-cyclopenten-1-yl)amino)methyl)-7-deazaguanosine). The chain is Queuine tRNA-ribosyltransferase from Klebsiella pneumoniae subsp. pneumoniae (strain ATCC 700721 / MGH 78578).